A 477-amino-acid polypeptide reads, in one-letter code: C4-dicarboxylate transport protein 1 (477 aa).

8 helical membrane-spanning segments follow: residues 21 to 39, 59 to 76, 89 to 111, 162 to 179, 200 to 221, 231 to 253, 342 to 364, and 368 to 387; these read PYVQ…GHFY, MIIA…IAGM, AMVY…GNVI, ILQV…LAMV, LVGI…FTIG, LAML…LGAV, VLLL…AGFV, and ATLS…ILGV. The tract at residues 435-477 is disordered; that stretch reads SAGQPLITPAPSNSAASLPVESPGWSQTPDDRAAGSKQTLAGR.

This sequence belongs to the dicarboxylate/amino acid:cation symporter (DAACS) (TC 2.A.23) family.

The protein resides in the cell inner membrane. Responsible for the transport of dicarboxylates such as succinate, fumarate, and malate from the periplasm across the membrane. This transport system plays an important role in the energy supply of rhizobium-legume symbionts. This is C4-dicarboxylate transport protein 1 (dctA1) from Mesorhizobium japonicum (strain LMG 29417 / CECT 9101 / MAFF 303099) (Mesorhizobium loti (strain MAFF 303099)).